Here is a 495-residue protein sequence, read N- to C-terminus: MLLLGLLLLLPLLAGARLLWNWWKLRSLHLPPLAPGFLHLLQPDLPIYLLGLTQKFGPIYRLHLGLQDVVVLNSKRTIEEAMVKKWADFAGRPEPLTYKLVSRNYPDLSLGDYSLLWKAHKKLTRSALLLGIRDSMEPVVEQLTQEFCERMRAQPGTPVAIEEEFSLLTCSIICYLTFGDKIKDDNLMPAYYKCIQEVLKTWSHWSIQIVDVIPFLRFFPNPGLRRLKQAIEKRDHIVEMQLRQHKESLVAGQWRDMMDYMLQGVAQPSMEEGSGQLLEGHVHMAAVDLLIGGTETTANTLSWAVVFLLHHPEIQQRLQEELDHELGPGASSSRVPYKDRARLPLLNATIAEVLRLRPVVPLALPHRTTRPSSISGYDIPEGTVIIPNLQGAHLDETVWERPHEFWPDRFLEPGKNSRALAFGCGARVCLGEPLARLELFVVLTRLLQAFTLLPSGDALPSLQPLPHCSVILKMQPFQVRLQPRGMGAHSPGQSQ.

2 residues coordinate heme b: Arg92 and Lys121. Arg234 contributes to the 17alpha-hydroxyprogesterone binding site. Arg234 contributes to the progesterone binding site. The heme b site is built by His366, Arg427, and Cys429.

This sequence belongs to the cytochrome P450 family. Requires heme b as cofactor.

Its subcellular location is the endoplasmic reticulum membrane. It is found in the microsome membrane. The enzyme catalyses progesterone + reduced [NADPH--hemoprotein reductase] + O2 = 21-hydroxyprogesterone + oxidized [NADPH--hemoprotein reductase] + H2O + H(+). The catalysed reaction is 17alpha-hydroxyprogesterone + reduced [NADPH--hemoprotein reductase] + O2 = 11-deoxycortisol + oxidized [NADPH--hemoprotein reductase] + H2O + H(+). In terms of biological role, a cytochrome P450 monooxygenase that plays a major role in adrenal steroidogenesis. Catalyzes the hydroxylation at C-21 of progesterone and 17alpha-hydroxyprogesterone to respectively form 11-deoxycorticosterone and 11-deoxycortisol, intermediate metabolites in the biosynthetic pathway of mineralocorticoids and glucocorticoids. Mechanistically, uses molecular oxygen inserting one oxygen atom into a substrate, and reducing the second into a water molecule, with two electrons provided by NADPH via cytochrome P450 reductase (CPR; NADPH-ferrihemoprotein reductase). In Homo sapiens (Human), this protein is Steroid 21-hydroxylase (CYP21A2).